The chain runs to 299 residues: ATP phosphoribosyltransferase (299 aa).

The protein belongs to the ATP phosphoribosyltransferase family. Long subfamily. In terms of assembly, equilibrium between an active dimeric form, an inactive hexameric form and higher aggregates. Interconversion between the various forms is largely reversible and is influenced by the natural substrates and inhibitors of the enzyme. The cofactor is Mg(2+).

It localises to the cytoplasm. It carries out the reaction 1-(5-phospho-beta-D-ribosyl)-ATP + diphosphate = 5-phospho-alpha-D-ribose 1-diphosphate + ATP. The protein operates within amino-acid biosynthesis; L-histidine biosynthesis; L-histidine from 5-phospho-alpha-D-ribose 1-diphosphate: step 1/9. Feedback inhibited by histidine. Catalyzes the condensation of ATP and 5-phosphoribose 1-diphosphate to form N'-(5'-phosphoribosyl)-ATP (PR-ATP). Has a crucial role in the pathway because the rate of histidine biosynthesis seems to be controlled primarily by regulation of HisG enzymatic activity. This Blochmanniella pennsylvanica (strain BPEN) protein is ATP phosphoribosyltransferase.